The following is a 173-amino-acid chain: uncharacterized protein (173 aa).

A signal peptide spans 1–25; sequence MPVVTAVGRRRGFAMPWVSTARSGA.

This is an uncharacterized protein from Mycobacterium bovis (strain ATCC BAA-935 / AF2122/97).